A 500-amino-acid polypeptide reads, in one-letter code: Glycogen synthase (500 aa).

Lysine 15 contributes to the ADP-alpha-D-glucose binding site.

The protein belongs to the glycosyltransferase 1 family. Bacterial/plant glycogen synthase subfamily.

It catalyses the reaction [(1-&gt;4)-alpha-D-glucosyl](n) + ADP-alpha-D-glucose = [(1-&gt;4)-alpha-D-glucosyl](n+1) + ADP + H(+). It participates in glycan biosynthesis; glycogen biosynthesis. Its function is as follows. Synthesizes alpha-1,4-glucan chains using ADP-glucose. The sequence is that of Glycogen synthase from Protochlamydia amoebophila (strain UWE25).